The chain runs to 160 residues: Probable chemoreceptor glutamine deamidase CheD 1 (160 aa).

This sequence belongs to the CheD family.

The enzyme catalyses L-glutaminyl-[protein] + H2O = L-glutamyl-[protein] + NH4(+). Its function is as follows. Probably deamidates glutamine residues to glutamate on methyl-accepting chemotaxis receptors (MCPs), playing an important role in chemotaxis. This is Probable chemoreceptor glutamine deamidase CheD 1 from Syntrophus aciditrophicus (strain SB).